The chain runs to 277 residues: Myelin proteolipid protein (277 aa).

The Cytoplasmic portion of the chain corresponds to 1–10; it reads MGLLECCARC. 3 S-palmitoyl cysteine lipidation sites follow: C6, C7, and C10. The helical transmembrane segment at 11 to 36 threads the bilayer; it reads LVGAPFASLVATGLCFFGVALFCGCG. At 37 to 59 the chain is on the extracellular side; that stretch reads HEALTGTEKLIETYFSKNYQDYE. The helical transmembrane segment at 60 to 88 threads the bilayer; the sequence is YLINVIHAFQYVIYGTASFFFLYGALLLA. Over 89–151 the chain is Cytoplasmic; sequence EGFYTTGAVR…LGKWLGHPDK (63 aa). The S-palmitoyl cysteine moiety is linked to residue C109. Residue S114 is modified to Phosphoserine. Phosphothreonine is present on residues T116 and T118. Residues C139 and C141 are each lipidated (S-palmitoyl cysteine). A helical transmembrane segment spans residues 152-178; that stretch reads FVGITYALTVVWLLVFACSAVPVYIYF. At 179 to 238 the chain is on the extracellular side; the sequence is NTWTTCQSIAFPSKTSASIGTLCADARMYGVLPWNAFPGKVCGSNLLSICKTAEFQMTFH. Disulfide bonds link C184/C228 and C201/C220. Residue T199 is the site of O-palmitoyl threonine attachment. Residues 239–268 traverse the membrane as a helical segment; sequence LFIAAFVGAAATLVSLLTFMIAATYNFAVL. The Cytoplasmic portion of the chain corresponds to 269 to 277; it reads KLMGRGTKF.

Belongs to the myelin proteolipid protein family. As to quaternary structure, interacts with MAL.

It is found in the cell membrane. Its subcellular location is the myelin membrane. Its function is as follows. This is the major myelin protein from the central nervous system. It plays an important role in the formation or maintenance of the multilamellar structure of myelin. The protein is Myelin proteolipid protein (PLP1) of Oryctolagus cuniculus (Rabbit).